The sequence spans 420 residues: Gamma-glutamyl phosphate reductase (420 aa).

This sequence belongs to the gamma-glutamyl phosphate reductase family.

The protein localises to the cytoplasm. The catalysed reaction is L-glutamate 5-semialdehyde + phosphate + NADP(+) = L-glutamyl 5-phosphate + NADPH + H(+). It participates in amino-acid biosynthesis; L-proline biosynthesis; L-glutamate 5-semialdehyde from L-glutamate: step 2/2. Catalyzes the NADPH-dependent reduction of L-glutamate 5-phosphate into L-glutamate 5-semialdehyde and phosphate. The product spontaneously undergoes cyclization to form 1-pyrroline-5-carboxylate. The polypeptide is Gamma-glutamyl phosphate reductase (Chlorobium luteolum (strain DSM 273 / BCRC 81028 / 2530) (Pelodictyon luteolum)).